The following is a 358-amino-acid chain: 4-hydroxy-3-methylbut-2-en-1-yl diphosphate synthase (flavodoxin) (358 aa).

4 residues coordinate [4Fe-4S] cluster: cysteine 270, cysteine 273, cysteine 305, and glutamate 312.

This sequence belongs to the IspG family. [4Fe-4S] cluster serves as cofactor.

It catalyses the reaction (2E)-4-hydroxy-3-methylbut-2-enyl diphosphate + oxidized [flavodoxin] + H2O + 2 H(+) = 2-C-methyl-D-erythritol 2,4-cyclic diphosphate + reduced [flavodoxin]. It participates in isoprenoid biosynthesis; isopentenyl diphosphate biosynthesis via DXP pathway; isopentenyl diphosphate from 1-deoxy-D-xylulose 5-phosphate: step 5/6. In terms of biological role, converts 2C-methyl-D-erythritol 2,4-cyclodiphosphate (ME-2,4cPP) into 1-hydroxy-2-methyl-2-(E)-butenyl 4-diphosphate. This chain is 4-hydroxy-3-methylbut-2-en-1-yl diphosphate synthase (flavodoxin), found in Vesicomyosocius okutanii subsp. Calyptogena okutanii (strain HA).